Consider the following 344-residue polypeptide: Outer membrane protein assembly factor BamC (344 aa).

The N-terminal stretch at methionine 1–alanine 24 is a signal peptide. The N-palmitoyl cysteine moiety is linked to residue cysteine 25. A lipid anchor (S-diacylglycerol cysteine) is attached at cysteine 25.

This sequence belongs to the BamC family. Part of the Bam complex, which is composed of the outer membrane protein BamA, and four lipoproteins BamB, BamC, BamD and BamE. Forms a subcomplex with BamD and BamE. The Bam complex has the shape of a hat, with the BamA beta-barrel crown in the outer membrane and the periplasmic brim formed by the BamA POTRA domains and the 4 lipoproteins.

The protein localises to the cell outer membrane. Functionally, part of the outer membrane protein assembly complex (Bam), which is involved in assembly and insertion of beta-barrel proteins into the outer membrane. Nonessential member of the complex that stabilizes the interaction between the essential proteins BamA and BamD. Efficient substrate folding and insertion into the outer membrane requires all 5 subunits. A lateral gate may open between the first and last strands of the BamA beta-barrel that allows substrate to insert into the outer membrane; comparison of the structures of complete and nearly complete Bam complexes show there is considerable movement of all 5 proteins. The polypeptide is Outer membrane protein assembly factor BamC (Escherichia coli (strain K12)).